The following is a 165-amino-acid chain: Endoribonuclease YbeY (165 aa).

Histidine 130, histidine 134, and histidine 140 together coordinate Zn(2+).

It belongs to the endoribonuclease YbeY family. Requires Zn(2+) as cofactor.

It localises to the cytoplasm. Its function is as follows. Single strand-specific metallo-endoribonuclease involved in late-stage 70S ribosome quality control and in maturation of the 3' terminus of the 16S rRNA. In Streptococcus pyogenes serotype M1, this protein is Endoribonuclease YbeY.